Here is a 357-residue protein sequence, read N- to C-terminus: Serine/threonine-protein kinase nekl-2 (357 aa).

The 264-residue stretch at 4 to 267 (YEKVRVVGRG…VSQLLSDPLV (264 aa)) folds into the Protein kinase domain. ATP is bound by residues 10–18 (VGRGAFGVC) and Lys35. Catalysis depends on Asp137, which acts as the Proton acceptor. Residues 281–290 (IEPPPTDKRK) are compositionally biased toward basic and acidic residues. The disordered stretch occupies residues 281–357 (IEPPPTDKRK…QSRSQVHSKY (77 aa)). Composition is skewed to polar residues over residues 293–327 (ASLS…QLTP) and 336–357 (FFSS…HSKY).

It belongs to the protein kinase superfamily. NEK Ser/Thr protein kinase family. NIMA subfamily. It depends on Mg(2+) as a cofactor. Expressed in hypodermal cells including in hyp7 syncytium but not in seam cells.

The protein localises to the cytoplasm. The enzyme catalyses L-seryl-[protein] + ATP = O-phospho-L-seryl-[protein] + ADP + H(+). It catalyses the reaction L-threonyl-[protein] + ATP = O-phospho-L-threonyl-[protein] + ADP + H(+). Functionally, probable serine/threonine-protein kinase required for the completion of molting. May play a role in endocytosis in the hypodermis syncytium. The protein is Serine/threonine-protein kinase nekl-2 of Caenorhabditis elegans.